The primary structure comprises 171 residues: UPF0098 protein aq_1250 (171 aa).

It belongs to the UPF0098 family.

This chain is UPF0098 protein aq_1250, found in Aquifex aeolicus (strain VF5).